Reading from the N-terminus, the 425-residue chain is Glutamyl-tRNA reductase (425 aa).

Substrate-binding positions include 49–52 (TCNR), S109, 114–116 (EGQ), and Q120. Catalysis depends on C50, which acts as the Nucleophile. 189-194 (GAGETG) is an NADP(+) binding site.

It belongs to the glutamyl-tRNA reductase family. In terms of assembly, homodimer.

The enzyme catalyses (S)-4-amino-5-oxopentanoate + tRNA(Glu) + NADP(+) = L-glutamyl-tRNA(Glu) + NADPH + H(+). It functions in the pathway porphyrin-containing compound metabolism; protoporphyrin-IX biosynthesis; 5-aminolevulinate from L-glutamyl-tRNA(Glu): step 1/2. It participates in porphyrin-containing compound metabolism; chlorophyll biosynthesis. In terms of biological role, catalyzes the NADPH-dependent reduction of glutamyl-tRNA(Glu) to glutamate 1-semialdehyde (GSA). This chain is Glutamyl-tRNA reductase, found in Chlorobium luteolum (strain DSM 273 / BCRC 81028 / 2530) (Pelodictyon luteolum).